A 224-amino-acid chain; its full sequence is Oocyte zinc finger protein XlCOF6.1 (224 aa).

C2H2-type zinc fingers lie at residues 6–28 (FSCS…CRSH), 34–56 (FHCT…QRYH), 62–84 (FTCF…IRMH), 90–112 (FSCS…QKIH), 118–140 (FSCS…YRTH), 146–168 (FPCP…RRTH), 174–196 (FACS…RLGH), and 202–224 (FSCS…LKSH).

Belongs to the krueppel C2H2-type zinc-finger protein family.

It is found in the nucleus. In terms of biological role, may be involved in transcriptional regulation. This chain is Oocyte zinc finger protein XlCOF6.1, found in Xenopus laevis (African clawed frog).